The following is a 47-amino-acid chain: Large ribosomal subunit protein bL34 (47 aa).

It belongs to the bacterial ribosomal protein bL34 family.

The chain is Large ribosomal subunit protein bL34 from Mycolicibacterium vanbaalenii (strain DSM 7251 / JCM 13017 / BCRC 16820 / KCTC 9966 / NRRL B-24157 / PYR-1) (Mycobacterium vanbaalenii).